A 420-amino-acid chain; its full sequence is MAKPNGIIYSSPKSPQHPKIYAKTQVIEHSTQSNGYLSMLRLKLSNKGFWRAYRAPSGYIATRGSSLRCHSAETRHAETEECVREYRDSSDTSSMQGKDKDPASLGKSGTPSPGLAEACKFVYNDAKFVNERAKNDIVLLSRGIMRLDARARQDVAFLGSEFLKLDARAREHTEKIDNDVKRKAERLHHVATILKNKAQSRLKNAADRHWSDGALEADLRRADFAAKQRAMEDALMALEFVKNIHDMMVSKMCNLKRSSLNPNKMTERITLEKNGKMLNFLPGEVSAERISAIQEAYWDIAAALSEADGIDYTDPEELELLVATLIDLDAMDGKSSVSLLAECSSSPDVNTRKALANALSAAPSMWTLGNAGMGALQRLAEDTTLNRCCCIENHQRIEEAVGNRGGGQLEVHGERKITRR.

The transit peptide at 1-68 (MAKPNGIIYS…YIATRGSSLR (68 aa)) directs the protein to the chloroplast. Residues 85-111 (EYRDSSDTSSMQGKDKDPASLGKSGTP) form a disordered region.

The protein belongs to the ATA15/OSA15 family. As to expression, expressed in leaves.

The protein resides in the plastid. The protein localises to the chloroplast. In terms of biological role, may be involved in the regulation of leaf senescence. This is Senescence-associated protein SPA15, chloroplastic from Ipomoea batatas (Sweet potato).